The sequence spans 120 residues: ESAT-6-like protein EsxQ (120 aa).

It belongs to the WXG100 family. ESAT-6 subfamily.

The protein localises to the secreted. In Mycobacterium bovis (strain ATCC BAA-935 / AF2122/97), this protein is ESAT-6-like protein EsxQ.